We begin with the raw amino-acid sequence, 147 residues long: Large ribosomal subunit protein bL9 (147 aa).

Belongs to the bacterial ribosomal protein bL9 family.

In terms of biological role, binds to the 23S rRNA. This Clostridium tetani (strain Massachusetts / E88) protein is Large ribosomal subunit protein bL9.